The following is a 357-amino-acid chain: Alanine racemase (357 aa).

The active-site Proton acceptor; specific for D-alanine is the lysine 33. Lysine 33 is subject to N6-(pyridoxal phosphate)lysine. Residue arginine 129 coordinates substrate. The Proton acceptor; specific for L-alanine role is filled by tyrosine 253. Methionine 301 contacts substrate.

Belongs to the alanine racemase family. Homodimer. The cofactor is pyridoxal 5'-phosphate.

The enzyme catalyses L-alanine = D-alanine. It participates in amino-acid biosynthesis; D-alanine biosynthesis; D-alanine from L-alanine: step 1/1. Functionally, catalyzes the interconversion of L-alanine and D-alanine. Is highly specific for alanine as substrate. May serve both anabolic and catabolic purposes. This Pseudomonas taetrolens protein is Alanine racemase.